The following is a 1604-amino-acid chain: Calmodulin-regulated spectrin-associated protein 1 (1604 aa).

At S216 the chain carries Phosphoserine. The Calponin-homology (CH) domain maps to 235 to 350; sequence PVDFARVVRY…FIAELFWWFE (116 aa). Residues S390, S394, and S435 each carry the phosphoserine modification. The interval 394–413 is disordered; sequence SPAAMSPADLPPSTQPLTEG. The segment at 444–491 is disordered; sequence RQKQQKVSQAEEIPDQRHRSNSLTRADGQPRGAAIAWPDKKNRPVSQP. T531 is modified (phosphothreonine). Phosphoserine occurs at positions 571, 574, 581, 593, 607, 647, 739, 745, 755, and 757. Residues 642 to 671 form a disordered region; that stretch reads MAKRPSEGSQPLVRKKVTGSHGSRDLNRTF. The segment covering 784–806 has biased composition (basic and acidic residues); that stretch reads EEESAKLQEDMKVKEHEDKDDAS. 2 disordered regions span residues 784 to 824 and 842 to 888; these read EEES…SMSM and LNSC…KDPA. Low complexity-rich tracts occupy residues 813–824 and 847–858; these read LSTTSQLSSMSM and TKSSTSSSQKTT. Over residues 874–886 the composition is skewed to basic and acidic residues; it reads QKREQSPSRHSKD. A sufficient for interaction with SPTBN1 region spans residues 888–909; the sequence is ASLLASELVQLHMQLEEKRRAI. Coiled coils occupy residues 890–926 and 1026–1058; these read LLAS…QRLK and DVNE…QEQL. Residues 920-939 form a sufficient for interaction with calmodulin region; that stretch reads SARQRLKLGKAAFLHVVKKG. 3 disordered regions span residues 1085–1163, 1246–1271, and 1298–1448; these read FVEP…GELP, PDED…KPGV, and RKAE…DRDW. S1090 carries the post-translational modification Phosphoserine. Positions 1113–1124 are enriched in basic and acidic residues; it reads RPAELKVPKDRQ. Residues 1125 to 1137 show a composition bias toward polar residues; that stretch reads QGCSRSKTPTPSV. S1154 is subject to Phosphoserine. Basic and acidic residues-rich tracts occupy residues 1246–1258 and 1298–1348; these read PDED…HESS and RKAE…EYLR. The stretch at 1286–1357 forms a coiled coil; the sequence is AKKRAAFLLK…RRKQQQALEE (72 aa). The segment covering 1363–1374 has biased composition (basic residues); it reads PKSKPKKPRPKS. The span at 1382–1394 shows a compositional bias: polar residues; that stretch reads SDSGTKCSSTPDN. The span at 1395-1412 shows a compositional bias: low complexity; that stretch reads LSQTHSGSSLSLASAATT. Residues S1400 and S1429 each carry the phosphoserine modification. Positions 1465–1599 constitute a CKK domain; it reads GPKLFKEPSS…QPKRPTVPKK (135 aa). Residue Y1539 is modified to Phosphotyrosine.

The protein belongs to the CAMSAP1 family. In terms of assembly, interacts with spectrin via SPTBN1; the interaction is direct. Interacts with calmodulin; calcium-dependent it prevents interaction with spectrin. In brain, specifically expressed in astrocytes (at protein level).

The protein resides in the cytoplasm. Its subcellular location is the cytoskeleton. Its function is as follows. Key microtubule-organizing protein that specifically binds the minus-end of non-centrosomal microtubules and regulates their dynamics and organization. Specifically recognizes growing microtubule minus-ends and stabilizes microtubules. Acts on free microtubule minus-ends that are not capped by microtubule-nucleating proteins or other factors and protects microtubule minus-ends from depolymerization. In contrast to CAMSAP2 and CAMSAP3, tracks along the growing tips of minus-end microtubules without significantly affecting the polymerization rate: binds at the very tip of the microtubules minus-end and acts as a minus-end tracking protein (-TIP) that dissociates from microtubules after allowing tubulin incorporation. Through interaction with spectrin may regulate neurite outgrowth. The protein is Calmodulin-regulated spectrin-associated protein 1 (Camsap1) of Rattus norvegicus (Rat).